Consider the following 253-residue polypeptide: Purine nucleoside phosphorylase DR_1966 (253 aa).

Zn(2+) is bound by residues H72, C106, and H123.

It belongs to the purine nucleoside phosphorylase YfiH/LACC1 family. Homodimer. The cofactor is Cu(2+). Zn(2+) is required as a cofactor.

It catalyses the reaction adenosine + phosphate = alpha-D-ribose 1-phosphate + adenine. The enzyme catalyses S-methyl-5'-thioadenosine + phosphate = 5-(methylsulfanyl)-alpha-D-ribose 1-phosphate + adenine. The catalysed reaction is inosine + phosphate = alpha-D-ribose 1-phosphate + hypoxanthine. It carries out the reaction adenosine + H2O + H(+) = inosine + NH4(+). In terms of biological role, purine nucleoside enzyme that catalyzes the phosphorolysis of adenosine and inosine nucleosides, yielding D-ribose 1-phosphate and the respective free bases, adenine and hypoxanthine. Also catalyzes the phosphorolysis of S-methyl-5'-thioadenosine into adenine and S-methyl-5-thio-alpha-D-ribose 1-phosphate. Also has adenosine deaminase activity. This is Purine nucleoside phosphorylase DR_1966 from Deinococcus radiodurans (strain ATCC 13939 / DSM 20539 / JCM 16871 / CCUG 27074 / LMG 4051 / NBRC 15346 / NCIMB 9279 / VKM B-1422 / R1).